Reading from the N-terminus, the 268-residue chain is Tryptophan synthase alpha chain (268 aa).

Active-site proton acceptor residues include Glu49 and Asp60.

This sequence belongs to the TrpA family. As to quaternary structure, tetramer of two alpha and two beta chains.

The catalysed reaction is (1S,2R)-1-C-(indol-3-yl)glycerol 3-phosphate + L-serine = D-glyceraldehyde 3-phosphate + L-tryptophan + H2O. The protein operates within amino-acid biosynthesis; L-tryptophan biosynthesis; L-tryptophan from chorismate: step 5/5. In terms of biological role, the alpha subunit is responsible for the aldol cleavage of indoleglycerol phosphate to indole and glyceraldehyde 3-phosphate. This Escherichia coli O17:K52:H18 (strain UMN026 / ExPEC) protein is Tryptophan synthase alpha chain.